The following is a 359-amino-acid chain: 4-hydroxy-3-methylbut-2-en-1-yl diphosphate synthase (flavodoxin) (359 aa).

The [4Fe-4S] cluster site is built by Cys264, Cys267, Cys299, and Glu306.

It belongs to the IspG family. [4Fe-4S] cluster serves as cofactor.

It carries out the reaction (2E)-4-hydroxy-3-methylbut-2-enyl diphosphate + oxidized [flavodoxin] + H2O + 2 H(+) = 2-C-methyl-D-erythritol 2,4-cyclic diphosphate + reduced [flavodoxin]. Its pathway is isoprenoid biosynthesis; isopentenyl diphosphate biosynthesis via DXP pathway; isopentenyl diphosphate from 1-deoxy-D-xylulose 5-phosphate: step 5/6. Its function is as follows. Converts 2C-methyl-D-erythritol 2,4-cyclodiphosphate (ME-2,4cPP) into 1-hydroxy-2-methyl-2-(E)-butenyl 4-diphosphate. The chain is 4-hydroxy-3-methylbut-2-en-1-yl diphosphate synthase (flavodoxin) from Helicobacter pylori (strain ATCC 700392 / 26695) (Campylobacter pylori).